We begin with the raw amino-acid sequence, 521 residues long: Amidase (521 aa).

Residues K96 and S171 each act as charge relay system in the active site. The tract at residues S155 to G174 is disordered. S195 acts as the Acyl-ester intermediate in catalysis.

It belongs to the amidase family. In terms of assembly, homodimer.

The catalysed reaction is a monocarboxylic acid amide + H2O = a monocarboxylate + NH4(+). Its function is as follows. Hydrolyzes propionamides efficiently, and also at a lower efficiency, acetamide, acrylamide and indoleacetamide. This enzyme seems to be stereospecific and can lead to the production of a single enantiomer. This chain is Amidase (amdA), found in Rhodococcus erythropolis (Arthrobacter picolinophilus).